The primary structure comprises 342 residues: S-adenosylmethionine:tRNA ribosyltransferase-isomerase (342 aa).

The protein belongs to the QueA family. Monomer.

Its subcellular location is the cytoplasm. The catalysed reaction is 7-aminomethyl-7-carbaguanosine(34) in tRNA + S-adenosyl-L-methionine = epoxyqueuosine(34) in tRNA + adenine + L-methionine + 2 H(+). It functions in the pathway tRNA modification; tRNA-queuosine biosynthesis. Its function is as follows. Transfers and isomerizes the ribose moiety from AdoMet to the 7-aminomethyl group of 7-deazaguanine (preQ1-tRNA) to give epoxyqueuosine (oQ-tRNA). The polypeptide is S-adenosylmethionine:tRNA ribosyltransferase-isomerase (Listeria monocytogenes serotype 4b (strain CLIP80459)).